Reading from the N-terminus, the 434-residue chain is APETALA2-like protein 2 (434 aa).

The disordered stretch occupies residues 1 to 116 (MLLDLNVESP…KTRRGPRSRS (116 aa)). Residues 12-23 (RSGTSSSSVLNS) are compositionally biased toward low complexity. Residues 25 to 38 (DAGGGGGGGGGGGL) show a composition bias toward gly residues. Over residues 72 to 87 (LPPPPPAAPSPAPAWQ) the composition is skewed to pro residues. Positions 104-113 (VAKKTRRGPR) are enriched in basic residues. The short motif at 106 to 115 (KKTRRGPRSR) is the Nuclear localization signal element. 2 DNA-binding regions (AP2/ERF) span residues 118–174 (QYRG…INFN) and 210–267 (KFRG…TNFE). An EAR motif is present at residues 291–295 (LDLRI).

This sequence belongs to the AP2/ERF transcription factor family. AP2 subfamily. In terms of assembly, may form homodimer. Interacts with TPR2/ASP1. In terms of tissue distribution, highly expressed in developing panicles and in young seedlings. Present at low levels at all developmental stages.

Its subcellular location is the nucleus. Probable transcription factor. Involved in spikelet transition. Together with SNB, controls synergistically inflorescence architecture and floral meristem establishment via the regulation of spatio-temporal expression of B- and E-function floral organ identity genes in the lodicules and of spikelet meristem genes. Prevents lemma and palea elongation as well as grain growth. The chain is APETALA2-like protein 2 from Oryza sativa subsp. japonica (Rice).